A 525-amino-acid polypeptide reads, in one-letter code: cAMP-dependent protein kinase regulatory subunit (525 aa).

The segment at 28–213 is dimerization and phosphorylation; sequence QFCANWFNSK…RIRGSIGNNL (186 aa). 2 disordered regions span residues 114 to 146 and 170 to 196; these read MDASQSPDSTPAPATPAAPAAPAAPAAPFSSLG and SVSAESMAPSAANAESDGSPLPKTVIP. Over residues 124–146 the composition is skewed to low complexity; that stretch reads PAPATPAAPAAPAAPAAPFSSLG. Serine 170 carries the post-translational modification Phosphoserine; by autocatalysis. Residues 214-345 and 348-472 contribute to the a nucleoside 3',5'-cyclic phosphate site; these read LFRN…FLMD and LFER…TYGD. 3',5'-cyclic AMP is bound by residues glutamate 295, arginine 304, and glutamate 417. A disordered region spans residues 497–525; the sequence is SGADTSFPHPMDSSAKPGEGAWSAPNPFA.

The protein belongs to the cAMP-dependent kinase regulatory chain family. As to quaternary structure, tetramer, composed of 2 regulatory (R) and 2 catalytic (C) subunits. In the presence of cAMP it dissociates into 2 active monomeric C subunits and an R dimer.

The chain is cAMP-dependent protein kinase regulatory subunit (PKAR) from Mycosarcoma maydis (Corn smut fungus).